The chain runs to 438 residues: Na(+)/H(+) antiporter NhaA (438 aa).

A run of 11 helical transmembrane segments spans residues 23 to 43 (FGGI…NSFV), 62 to 82 (FFIG…LFFL), 104 to 124 (SFPV…YFFL), 133 to 153 (GFGI…MLLG), 162 to 182 (VFLI…IALF), 185 to 205 (TNLK…LALL), 212 to 232 (SLIP…QSGI), 302 to 322 (FLAP…NAGV), 337 to 357 (LGVI…ITFI), 372 to 392 (WWHI…SMFI), and 410 to 430 (IAIL…LFLL).

This sequence belongs to the NhaA Na(+)/H(+) (TC 2.A.33) antiporter family.

The protein localises to the cell inner membrane. It catalyses the reaction Na(+)(in) + 2 H(+)(out) = Na(+)(out) + 2 H(+)(in). Functionally, na(+)/H(+) antiporter that extrudes sodium in exchange for external protons. The chain is Na(+)/H(+) antiporter NhaA from Helicobacter acinonychis (strain Sheeba).